Consider the following 247-residue polypeptide: MKKDTLFATRKEPVPAFDFNESVASVFSDMLERSVPMYRESITRQAELALDFYRSKTLIYDLGCSHGNFGMLAGKRFGDRPFSMVGVDSSPPMIEKYKQRLEQESFRDNIVLVCDRVENLCLGNASVVVVNLTLQFLSLDRRDTLISDIYTALVPGGILLLTEKVLAWDSSIAAVHLDYYSRFKRENGYSELEISQKREALENVLVPETLEVHQQRLARAGFDRMDVWLKWFNFASMIAVKPERPGK.

Residues Tyr-38, 63–65, Asn-131, and Arg-198 each bind S-adenosyl-L-methionine; that span reads GCS.

Belongs to the class I-like SAM-binding methyltransferase superfamily. Cx-SAM synthase family. Homodimer.

It carries out the reaction prephenate + S-adenosyl-L-methionine = carboxy-S-adenosyl-L-methionine + 3-phenylpyruvate + H2O. Its function is as follows. Catalyzes the conversion of S-adenosyl-L-methionine (SAM) to carboxy-S-adenosyl-L-methionine (Cx-SAM). This Desulforapulum autotrophicum (strain ATCC 43914 / DSM 3382 / VKM B-1955 / HRM2) (Desulfobacterium autotrophicum) protein is Carboxy-S-adenosyl-L-methionine synthase.